The following is a 180-amino-acid chain: Shikimate kinase (180 aa).

14–19 (GAGKSS) contributes to the ATP binding site. Position 18 (Ser18) interacts with Mg(2+). Asp36, Arg60, and Gly82 together coordinate substrate. Arg120 contacts ATP. Arg139 is a binding site for substrate.

This sequence belongs to the shikimate kinase family. In terms of assembly, monomer. Requires Mg(2+) as cofactor.

Its subcellular location is the cytoplasm. It carries out the reaction shikimate + ATP = 3-phosphoshikimate + ADP + H(+). It participates in metabolic intermediate biosynthesis; chorismate biosynthesis; chorismate from D-erythrose 4-phosphate and phosphoenolpyruvate: step 5/7. Functionally, catalyzes the specific phosphorylation of the 3-hydroxyl group of shikimic acid using ATP as a cosubstrate. The chain is Shikimate kinase from Xylella fastidiosa (strain 9a5c).